The chain runs to 188 residues: Ribosome-recycling factor (188 aa).

Belongs to the RRF family.

It localises to the cytoplasm. Functionally, responsible for the release of ribosomes from messenger RNA at the termination of protein biosynthesis. May increase the efficiency of translation by recycling ribosomes from one round of translation to another. In Cereibacter sphaeroides (strain ATCC 17029 / ATH 2.4.9) (Rhodobacter sphaeroides), this protein is Ribosome-recycling factor.